Consider the following 472-residue polypeptide: Ribosomal protein uS12 methylthiotransferase RimO (472 aa).

One can recognise an MTTase N-terminal domain in the interval 33–143; the sequence is NRIGFVSLGC…VLKHVHKYVP (111 aa). [4Fe-4S] cluster contacts are provided by Cys42, Cys78, Cys107, Cys175, Cys179, and Cys182. The 238-residue stretch at 161-398 folds into the Radical SAM core domain; that stretch reads LTPKHYAYLK…MEVQAEISAE (238 aa). In terms of domain architecture, TRAM spans 401–467; the sequence is ARFVGRTLDI…EHDLWAEVVD (67 aa).

This sequence belongs to the methylthiotransferase family. RimO subfamily. Requires [4Fe-4S] cluster as cofactor.

It is found in the cytoplasm. It catalyses the reaction L-aspartate(89)-[ribosomal protein uS12]-hydrogen + (sulfur carrier)-SH + AH2 + 2 S-adenosyl-L-methionine = 3-methylsulfanyl-L-aspartate(89)-[ribosomal protein uS12]-hydrogen + (sulfur carrier)-H + 5'-deoxyadenosine + L-methionine + A + S-adenosyl-L-homocysteine + 2 H(+). Functionally, catalyzes the methylthiolation of an aspartic acid residue of ribosomal protein uS12. This Shewanella baltica (strain OS155 / ATCC BAA-1091) protein is Ribosomal protein uS12 methylthiotransferase RimO.